Here is a 216-residue protein sequence, read N- to C-terminus: Protein shisa-5 (216 aa).

An N-terminal signal peptide occupies residues 1 to 26 (MAAPAPAPRILVLLLLLLPAPEGAQS). Residues 27–93 (ELCMISHGRK…SGFDSDPVAR (67 aa)) are Extracellular-facing. Residues 94–114 (FGTVIAIGVTLFVIAVVTVIV) form a helical membrane-spanning segment. Residues 115-216 (CCTCSCCCLY…AYMEPPKAVP (102 aa)) are Cytoplasmic-facing.

Belongs to the shisa family. As to quaternary structure, interacts with PDCD6; PDCD6 can stabilize SHISA5.

Its subcellular location is the endoplasmic reticulum membrane. The protein localises to the nucleus membrane. In terms of biological role, can induce apoptosis in a caspase-dependent manner and plays a role in p53/TP53-dependent apoptosis. The sequence is that of Protein shisa-5 (SHISA5) from Bos taurus (Bovine).